Reading from the N-terminus, the 333-residue chain is Phosphate acetyltransferase (333 aa).

This sequence belongs to the phosphate acetyltransferase and butyryltransferase family.

The protein localises to the cytoplasm. It catalyses the reaction acetyl-CoA + phosphate = acetyl phosphate + CoA. It functions in the pathway metabolic intermediate biosynthesis; acetyl-CoA biosynthesis; acetyl-CoA from acetate: step 2/2. The sequence is that of Phosphate acetyltransferase (pta) from Clostridium acetobutylicum (strain ATCC 824 / DSM 792 / JCM 1419 / IAM 19013 / LMG 5710 / NBRC 13948 / NRRL B-527 / VKM B-1787 / 2291 / W).